Reading from the N-terminus, the 402-residue chain is Beta-peptidyl aminopeptidase BapA (402 aa).

Residues 1-29 (MTSTQRLWSGALPLLTALIVSIAATASLA) form the signal peptide. The Nucleophile role is filled by serine 279. Active-site proton donor/acceptor residues include serine 317 and glutamate 319.

This sequence belongs to the peptidase S58 family. In terms of assembly, heterooctamer of 4 heterodimers ((alpha:beta)4); each heterodimer is composed of an alpha subunit and a beta subunit processed from the same precursor. Post-translationally, autoproteolytic processing to generate the alpha and beta subunit is required for self-activation and is proposed to use a similar mechanism as substrate cleavage.

The protein localises to the periplasm. It carries out the reaction Cleaves N-terminal beta-homoamino acids from peptides composed of 2 to 6 amino acids.. With respect to regulation, inhibited by AEBSF (4-(2-aminoethyl)benzenesulfonyl fluoride, Pefabloc SC), ampicillin and AMP(hyd) (ampillicin-derived penicilloic acid). Beta-aminopeptidase that can cleave synthetic beta-peptides which consist of backbone-elongated beta-amino acid residues that are not processed by common proteolytic enzymes. Can cleave the beta-peptides beta-homoVal-beta-homoAla-beta-homoLeu and beta-homoAla-beta-homoLeu. Requires a beta-amino acid at the N-terminus of peptide substrates and cleaves the peptide bond between the N-terminal beta-amino acid and the amino acid at the second position of tripeptidic substrates of the general structure H-betahXaa-Ile-betahTyr-OH according to the following preferences with regard to the side chain of the N-terminal beta-amino acid: aliphatic and aromatic &gt; OH-containing &gt; hydrogen, basic and polar. The protein is Beta-peptidyl aminopeptidase BapA of Sphingosinicella xenopeptidilytica.